Here is a 181-residue protein sequence, read N- to C-terminus: I-Kappa-B like protein C2 (181 aa).

ANK repeat units follow at residues 54-86 (DGKX…DINS), 91-121 (DGNT…DMEI), and 125-154 (ARKT…RCDV).

The protein belongs to the polydnaviridae I-Kappa-B-like protein family.

Suppresses the host immune response through NF-kappa-B inactivation. Possesses ankyrin repeat domains required for NF-kappa-B binding but lacks the regulatory regions required for dissociation from NF-kappa-B and degradation. Therefore, prevents host NF-kappa-B release and subsequent activation. This Microplitis demolitor (Parasitoid wasp) protein is I-Kappa-B like protein C2 (C2).